The sequence spans 424 residues: Serine hydroxymethyltransferase 1 (424 aa).

(6S)-5,6,7,8-tetrahydrofolate-binding positions include Leu125 and 129–131; that span reads GHL. Lys234 carries the post-translational modification N6-(pyridoxal phosphate)lysine.

It belongs to the SHMT family. Homodimer. It depends on pyridoxal 5'-phosphate as a cofactor.

The protein resides in the cytoplasm. The enzyme catalyses (6R)-5,10-methylene-5,6,7,8-tetrahydrofolate + glycine + H2O = (6S)-5,6,7,8-tetrahydrofolate + L-serine. It functions in the pathway one-carbon metabolism; tetrahydrofolate interconversion. Its pathway is amino-acid biosynthesis; glycine biosynthesis; glycine from L-serine: step 1/1. Functionally, catalyzes the reversible interconversion of serine and glycine with tetrahydrofolate (THF) serving as the one-carbon carrier. This reaction serves as the major source of one-carbon groups required for the biosynthesis of purines, thymidylate, methionine, and other important biomolecules. Also exhibits THF-independent aldolase activity toward beta-hydroxyamino acids, producing glycine and aldehydes, via a retro-aldol mechanism. This Burkholderia lata (strain ATCC 17760 / DSM 23089 / LMG 22485 / NCIMB 9086 / R18194 / 383) protein is Serine hydroxymethyltransferase 1.